Consider the following 260-residue polypeptide: Acetylglutamate kinase (260 aa).

Substrate contacts are provided by residues 46–47 (GG), Arg-68, and Asn-160.

It belongs to the acetylglutamate kinase family. ArgB subfamily.

The protein resides in the cytoplasm. It catalyses the reaction N-acetyl-L-glutamate + ATP = N-acetyl-L-glutamyl 5-phosphate + ADP. It participates in amino-acid biosynthesis; L-arginine biosynthesis; N(2)-acetyl-L-ornithine from L-glutamate: step 2/4. Its function is as follows. Catalyzes the ATP-dependent phosphorylation of N-acetyl-L-glutamate. The polypeptide is Acetylglutamate kinase (Shewanella denitrificans (strain OS217 / ATCC BAA-1090 / DSM 15013)).